Here is a 208-residue protein sequence, read N- to C-terminus: RNA-binding protein KhpB (208 aa).

Positions 5-55 (TAAGRNVDEAVQSGLQELGLTKDKVEITVIEEGNKGFLGIFGKKPAIVKLV) are jag_N domain. The KH domain occupies 58–135 (IDPIQQAKLY…GQYKNVTVDA (78 aa)). The region spanning 140–208 (LKRKETLSQL…NRHLVISHKR (69 aa)) is the R3H domain.

It belongs to the KhpB RNA-binding protein family. In terms of assembly, forms a complex with KhpA.

The protein localises to the cytoplasm. In terms of biological role, a probable RNA chaperone. Forms a complex with KhpA which binds to cellular RNA and controls its expression. Plays a role in peptidoglycan (PG) homeostasis and cell length regulation. The protein is RNA-binding protein KhpB of Bacillus subtilis (strain 168).